The following is a 352-amino-acid chain: D-alanine--D-alanine ligase A (352 aa).

An ATP-grasp domain is found at Lys-138–Glu-341. Glu-165–Glu-220 provides a ligand contact to ATP. Residues Asp-295, Glu-308, and Asn-310 each coordinate Mg(2+).

This sequence belongs to the D-alanine--D-alanine ligase family. The cofactor is Mg(2+). Requires Mn(2+) as cofactor.

The protein localises to the cytoplasm. It carries out the reaction 2 D-alanine + ATP = D-alanyl-D-alanine + ADP + phosphate + H(+). The protein operates within cell wall biogenesis; peptidoglycan biosynthesis. In terms of biological role, cell wall formation. The chain is D-alanine--D-alanine ligase A from Pseudomonas putida (strain ATCC 47054 / DSM 6125 / CFBP 8728 / NCIMB 11950 / KT2440).